We begin with the raw amino-acid sequence, 365 residues long: MTRLTLALDVMGGDFGPSVTVPAALQALNSNSQLTLLLVGDPDAITPLLAKADFEQRSRLQIIPAQSVIASDARPAQAIRSSRGSSMRVALELVKEGRAEACVSAGNTGALMGLAKLLLKPIEGIERPALVTVLPHQQKGKTVVLDLGANVDCDSTMLVQFAVMGAVLAEEVVGMTNPRVALLNIGEEEMKGLSSIRDAAAVLKTLPSLNYIGYLEANELLTGKTDVLVCDGFTGNVTLKTMEGVVRMFLSLLKSQGEGKKRSWWLLLLKRWLQKSLARRFSHLNPDQYNGACLLGLRGSVIKSHGAANQRAFSVAIEQAVQAVQRQIPQRIAARLESLYPAGFALPESDSDVNSRQQSGTNGHD.

Belongs to the PlsX family. In terms of assembly, homodimer. Probably interacts with PlsY.

It localises to the cytoplasm. The enzyme catalyses a fatty acyl-[ACP] + phosphate = an acyl phosphate + holo-[ACP]. The protein operates within lipid metabolism; phospholipid metabolism. Functionally, catalyzes the reversible formation of acyl-phosphate (acyl-PO(4)) from acyl-[acyl-carrier-protein] (acyl-ACP). This enzyme utilizes acyl-ACP as fatty acyl donor, but not acyl-CoA. This Klebsiella pneumoniae (strain 342) protein is Phosphate acyltransferase.